A 356-amino-acid polypeptide reads, in one-letter code: Dual-specificity RNA methyltransferase RlmN (356 aa).

E89 (proton acceptor) is an active-site residue. The Radical SAM core domain occupies 108–341; the sequence is SHARYTICVS…CTIRESKGLD (234 aa). A disulfide bond links C115 and C346. Positions 122, 126, and 129 each coordinate [4Fe-4S] cluster. Residues 172–173, S204, 227–229, and N303 each bind S-adenosyl-L-methionine; these read GE and SLH. The active-site S-methylcysteine intermediate is the C346.

The protein belongs to the radical SAM superfamily. RlmN family. [4Fe-4S] cluster serves as cofactor.

The protein resides in the cytoplasm. The catalysed reaction is adenosine(2503) in 23S rRNA + 2 reduced [2Fe-2S]-[ferredoxin] + 2 S-adenosyl-L-methionine = 2-methyladenosine(2503) in 23S rRNA + 5'-deoxyadenosine + L-methionine + 2 oxidized [2Fe-2S]-[ferredoxin] + S-adenosyl-L-homocysteine. It carries out the reaction adenosine(37) in tRNA + 2 reduced [2Fe-2S]-[ferredoxin] + 2 S-adenosyl-L-methionine = 2-methyladenosine(37) in tRNA + 5'-deoxyadenosine + L-methionine + 2 oxidized [2Fe-2S]-[ferredoxin] + S-adenosyl-L-homocysteine. Specifically methylates position 2 of adenine 2503 in 23S rRNA and position 2 of adenine 37 in tRNAs. m2A2503 modification seems to play a crucial role in the proofreading step occurring at the peptidyl transferase center and thus would serve to optimize ribosomal fidelity. In Campylobacter jejuni subsp. jejuni serotype O:23/36 (strain 81-176), this protein is Dual-specificity RNA methyltransferase RlmN.